A 309-amino-acid polypeptide reads, in one-letter code: MTQFAFVFPGQGSQSVGMLAEMAANYPIVEETFAEASAALGYDLWALTQQGPAEELNKTWQTQPALLTASVALWRVWQQQGGKMPALMAGHSLGEYSALVCAGVINFADAVRLVEMRGKFMQEAVPEGTGGMSAIIGLDDASIAKACEESAEGQVVSPVNFNSPGQVVIAGHKEAVERAGAACKAAGAKRALPLPVSVPSHCALMKPAADKLAVELAKITFSAPTVPVVNNVDVKCETDAAAIRDALVRQLYNPVQWTKSVEFIAAQGVEHLYEVGPGKVLTGLTKRIVDTLTASALNEPAALSAALTQ.

Active-site residues include S92 and H201.

This sequence belongs to the FabD family.

The enzyme catalyses holo-[ACP] + malonyl-CoA = malonyl-[ACP] + CoA. It functions in the pathway lipid metabolism; fatty acid biosynthesis. The polypeptide is Malonyl CoA-acyl carrier protein transacylase (fabD) (Salmonella typhimurium (strain LT2 / SGSC1412 / ATCC 700720)).